The following is a 91-amino-acid chain: Non-specific lipid-transfer protein 1 (91 aa).

4 cysteine pairs are disulfide-bonded: Cys-3–Cys-50, Cys-13–Cys-27, Cys-28–Cys-73, and Cys-48–Cys-87.

It belongs to the plant LTP family.

Its function is as follows. Plant non-specific lipid-transfer proteins transfer phospholipids as well as galactolipids across membranes. May play a role in wax or cutin deposition in the cell walls of expanding epidermal cells and certain secretory tissues. The sequence is that of Non-specific lipid-transfer protein 1 from Morus nigra (Black mulberry).